A 289-amino-acid polypeptide reads, in one-letter code: Leucine--tRNA ligase subunit beta (289 aa).

Positions 45–49 match the 'KMSKS' region motif; the sequence is KMSKS. Lysine 48 contributes to the ATP binding site.

Belongs to the class-I aminoacyl-tRNA synthetase family. Seems to consist of an alpha chain and a beta chain.

It is found in the cytoplasm. The enzyme catalyses tRNA(Leu) + L-leucine + ATP = L-leucyl-tRNA(Leu) + AMP + diphosphate. This chain is Leucine--tRNA ligase subunit beta (leuS'), found in Aquifex aeolicus (strain VF5).